Here is a 255-residue protein sequence, read N- to C-terminus: 5-oxoprolinase subunit A (255 aa).

It belongs to the LamB/PxpA family. Forms a complex composed of PxpA, PxpB and PxpC.

The catalysed reaction is 5-oxo-L-proline + ATP + 2 H2O = L-glutamate + ADP + phosphate + H(+). In terms of biological role, catalyzes the cleavage of 5-oxoproline to form L-glutamate coupled to the hydrolysis of ATP to ADP and inorganic phosphate. The sequence is that of 5-oxoprolinase subunit A from Rhodopseudomonas palustris (strain BisA53).